Reading from the N-terminus, the 256-residue chain is Thiazole synthase (256 aa).

Lys-96 functions as the Schiff-base intermediate with DXP in the catalytic mechanism. 1-deoxy-D-xylulose 5-phosphate-binding positions include Gly-157, 183-184, and 205-206; these read AG and NT.

It belongs to the ThiG family. As to quaternary structure, homotetramer. Forms heterodimers with either ThiH or ThiS.

It is found in the cytoplasm. The catalysed reaction is [ThiS sulfur-carrier protein]-C-terminal-Gly-aminoethanethioate + 2-iminoacetate + 1-deoxy-D-xylulose 5-phosphate = [ThiS sulfur-carrier protein]-C-terminal Gly-Gly + 2-[(2R,5Z)-2-carboxy-4-methylthiazol-5(2H)-ylidene]ethyl phosphate + 2 H2O + H(+). It participates in cofactor biosynthesis; thiamine diphosphate biosynthesis. Its function is as follows. Catalyzes the rearrangement of 1-deoxy-D-xylulose 5-phosphate (DXP) to produce the thiazole phosphate moiety of thiamine. Sulfur is provided by the thiocarboxylate moiety of the carrier protein ThiS. In vitro, sulfur can be provided by H(2)S. In Bacillus mycoides (strain KBAB4) (Bacillus weihenstephanensis), this protein is Thiazole synthase.